The chain runs to 603 residues: uncharacterized protein (603 aa).

The region spanning 1–93 is the PE domain; that stretch reads MSFVIAAPET…AGAYASAEAA (93 aa). The interval 309–333 is disordered; that stretch reads GIFTGNGGTGGTGGTGTGNQLVGGE.

The protein belongs to the mycobacterial PE family. PGRS subfamily.

This is an uncharacterized protein from Mycobacterium tuberculosis (strain CDC 1551 / Oshkosh).